The following is a 174-amino-acid chain: Heat shock protein 22 (174 aa).

Residues 44-154 (QIARWQEQEF…TLKEREVTIE (111 aa)) enclose the sHSP domain. Phosphothreonine is present on Thr-152. The disordered stretch occupies residues 152-174 (TIEQTGEPAKKSAEEPNDKAASQ). Residues 159 to 174 (PAKKSAEEPNDKAASQ) show a composition bias toward basic and acidic residues.

Belongs to the small heat shock protein (HSP20) family.

This is Heat shock protein 22 (Hsp22) from Drosophila melanogaster (Fruit fly).